The following is a 463-amino-acid chain: Cysteine--tRNA ligase (463 aa).

C33 lines the Zn(2+) pocket. The short motif at 35–45 (PTVYDFAHIGN) is the 'HIGH' region element. Residues C221, H246, and E250 each contribute to the Zn(2+) site. A 'KMSKS' region motif is present at residues 279–283 (KMSKS). An ATP-binding site is contributed by K282.

The protein belongs to the class-I aminoacyl-tRNA synthetase family. In terms of assembly, monomer. Requires Zn(2+) as cofactor.

The protein localises to the cytoplasm. It carries out the reaction tRNA(Cys) + L-cysteine + ATP = L-cysteinyl-tRNA(Cys) + AMP + diphosphate. In Rhizobium rhizogenes (strain K84 / ATCC BAA-868) (Agrobacterium radiobacter), this protein is Cysteine--tRNA ligase.